The following is a 149-amino-acid chain: Large ribosomal subunit protein bL9 (149 aa).

Belongs to the bacterial ribosomal protein bL9 family.

Binds to the 23S rRNA. The chain is Large ribosomal subunit protein bL9 from Vibrio cholerae serotype O1 (strain ATCC 39541 / Classical Ogawa 395 / O395).